Here is a 242-residue protein sequence, read N- to C-terminus: Uridylate kinase (242 aa).

17-20 (KLGG) provides a ligand contact to ATP. Residue glycine 58 participates in UMP binding. The ATP site is built by glycine 59 and arginine 63. Residues aspartate 78 and 139-146 (MGMPYFST) each bind UMP. The ATP site is built by phenylalanine 172 and aspartate 175.

It belongs to the UMP kinase family. In terms of assembly, homohexamer.

Its subcellular location is the cytoplasm. It carries out the reaction UMP + ATP = UDP + ADP. It participates in pyrimidine metabolism; CTP biosynthesis via de novo pathway; UDP from UMP (UMPK route): step 1/1. With respect to regulation, inhibited by UTP. Functionally, catalyzes the reversible phosphorylation of UMP to UDP. The polypeptide is Uridylate kinase (Rhodococcus jostii (strain RHA1)).